The following is a 259-amino-acid chain: Deoxyribose-phosphate aldolase (259 aa).

D102 acts as the Proton donor/acceptor in catalysis. The active-site Schiff-base intermediate with acetaldehyde is the K167. The active-site Proton donor/acceptor is the K201.

The protein belongs to the DeoC/FbaB aldolase family. DeoC type 2 subfamily.

The protein resides in the cytoplasm. It carries out the reaction 2-deoxy-D-ribose 5-phosphate = D-glyceraldehyde 3-phosphate + acetaldehyde. It functions in the pathway carbohydrate degradation; 2-deoxy-D-ribose 1-phosphate degradation; D-glyceraldehyde 3-phosphate and acetaldehyde from 2-deoxy-alpha-D-ribose 1-phosphate: step 2/2. Functionally, catalyzes a reversible aldol reaction between acetaldehyde and D-glyceraldehyde 3-phosphate to generate 2-deoxy-D-ribose 5-phosphate. The protein is Deoxyribose-phosphate aldolase of Escherichia fergusonii (strain ATCC 35469 / DSM 13698 / CCUG 18766 / IAM 14443 / JCM 21226 / LMG 7866 / NBRC 102419 / NCTC 12128 / CDC 0568-73).